A 95-amino-acid chain; its full sequence is Osteocalcin-2 (95 aa).

A signal peptide spans Met1–Ala23. Positions Lys24–Arg49 are excised as a propeptide. The Gla domain maps to Arg46–Gly92. Positions 62, 66, 69, and 75 each coordinate Ca(2+). A disulfide bridge connects residues Cys68 and Cys74.

Belongs to the osteocalcin/matrix Gla protein family. In terms of processing, gamma-carboxyglutamate residues are formed by vitamin K dependent carboxylation by GGCX. These residues are essential for the binding of calcium. Carboxylated in a Ptprv/Esp-dependent process. Decarboxylation promotes the hormone activity. Bone.

It is found in the secreted. Its function is as follows. The carboxylated form is one of the main organic components of the bone matrix, which constitutes 1-2% of the total bone protein: it acts as a negative regulator of bone formation and is required to limit bone formation without impairing bone resorption or mineralization. The carboxylated form binds strongly to apatite and calcium. The uncarboxylated form acts as a hormone secreted by osteoblasts, which regulates different cellular processes, such as energy metabolism, male fertility and brain development. Regulates of energy metabolism by acting as a hormone favoring pancreatic beta-cell proliferation, insulin secretion and sensitivity and energy expenditure. Uncarboxylated osteocalcin hormone also promotes testosterone production in the testes: acts as a ligand for G protein-coupled receptor GPRC6A at the surface of Leydig cells, initiating a signaling response that promotes the expression of enzymes required for testosterone synthesis in a CREB-dependent manner. Also acts as a regulator of brain development: osteocalcin hormone crosses the blood-brain barrier and acts as a ligand for GPR158 on neurons, initiating a signaling response that prevents neuronal apoptosis in the hippocampus, favors the synthesis of all monoamine neurotransmitters and inhibits that of gamma-aminobutyric acid (GABA). Osteocalcin also crosses the placenta during pregnancy and maternal osteocalcin is required for fetal brain development. The sequence is that of Osteocalcin-2 (Bglap2) from Mus musculus (Mouse).